The following is a 100-amino-acid chain: Urease subunit gamma (100 aa).

The protein belongs to the urease gamma subunit family. Heterotrimer of UreA (gamma), UreB (beta) and UreC (alpha) subunits. Three heterotrimers associate to form the active enzyme.

The protein localises to the cytoplasm. It carries out the reaction urea + 2 H2O + H(+) = hydrogencarbonate + 2 NH4(+). It participates in nitrogen metabolism; urea degradation; CO(2) and NH(3) from urea (urease route): step 1/1. The sequence is that of Urease subunit gamma from Mycobacterium ulcerans (strain Agy99).